Consider the following 637-residue polypeptide: Poly [ADP-ribose] polymerase 2 (637 aa).

A DNA-binding region spans residues 1 to 140; it reads MANKLKVDEL…KKEEKIVTAT (140 aa). Residues 2 to 36 form the SAP 1 domain; sequence ANKLKVDELRLKLAERGLSTTGVKAVLVERLEEAI. A compositionally biased stretch (basic and acidic residues) spans 35–46; that stretch reads AIAEDTKKEESK. Residues 35–56 are disordered; that stretch reads AIAEDTKKEESKSKRKRNSSND. The Nuclear localization signal signature appears at 41–62; sequence KKEESKSKRKRNSSNDTYESNK. Positions 69-103 constitute an SAP 2 domain; it reads FRGMIVKELREEAIKRGLDTTGTKKDLLERLCNDA. Polar residues predominate over residues 106–117; the sequence is VSNAPVKSSNGT. The interval 106-134 is disordered; sequence VSNAPVKSSNGTDEAEDDNNGFEEEKKEE. A compositionally biased stretch (acidic residues) spans 118–127; it reads DEAEDDNNGF. A WGR domain is found at 158-255; the sequence is QYHVLQRGDD…KEFIPHPKSY (98 aa). The region spanning 286-404 is the PARP alpha-helical domain; sequence QSKLDTRVAK…EIELATKLLS (119 aa). The 226-residue stretch at 412-637 folds into the PARP catalytic domain; it reads DPLYYHYQQL…VIQVKFNYKH (226 aa).

It belongs to the ARTD/PARP family.

It localises to the nucleus. It carries out the reaction NAD(+) + (ADP-D-ribosyl)n-acceptor = nicotinamide + (ADP-D-ribosyl)n+1-acceptor + H(+).. The enzyme catalyses L-aspartyl-[protein] + NAD(+) = 4-O-(ADP-D-ribosyl)-L-aspartyl-[protein] + nicotinamide. It catalyses the reaction L-glutamyl-[protein] + NAD(+) = 5-O-(ADP-D-ribosyl)-L-glutamyl-[protein] + nicotinamide. Its function is as follows. Involved in the base excision repair (BER) pathway, by catalyzing the poly(ADP-ribosyl)ation of a limited number of acceptor proteins involved in chromatin architecture and in DNA metabolism. This modification follows DNA damages and appears as an obligatory step in a detection/signaling pathway leading to the reparation of DNA strand breaks. The polypeptide is Poly [ADP-ribose] polymerase 2 (PARP2) (Arabidopsis thaliana (Mouse-ear cress)).